We begin with the raw amino-acid sequence, 129 residues long: Small ribosomal subunit protein uS8mz (129 aa).

This sequence belongs to the universal ribosomal protein uS8 family. Component of the mitochondrial ribosome small subunit.

The protein localises to the mitochondrion. The protein is Small ribosomal subunit protein uS8mz (RPS15AB) of Arabidopsis thaliana (Mouse-ear cress).